Reading from the N-terminus, the 230-residue chain is Small ribosomal subunit protein uS3 (230 aa).

In terms of domain architecture, KH type-2 spans 39 to 107; the sequence is VRKFLEKKLE…PAQINIAEIR (69 aa).

The protein belongs to the universal ribosomal protein uS3 family. In terms of assembly, part of the 30S ribosomal subunit. Forms a tight complex with proteins S10 and S14.

Its function is as follows. Binds the lower part of the 30S subunit head. Binds mRNA in the 70S ribosome, positioning it for translation. The protein is Small ribosomal subunit protein uS3 of Shewanella amazonensis (strain ATCC BAA-1098 / SB2B).